Consider the following 714-residue polypeptide: MAPRRRRRAARSSRPLLLALLAAAVNNFAPAGGVEVLAKSRLESCARGGSDDGRDRLTCDSKIVVDLAVPSGSASLVARVAEVEENGTEAGEMPIRDPLIITINKSEVYALYDLTYLRDVAYKPEEKFVKTRKCEPEAGANVVKSCERLRDEKGSIIEHTEPVCCPCGPHRRVPSSCGNILDKVAKGKANTAHCLRFPDDWFHVFDIGRRSLWFSIRVQVKKGSSESEVIVGPENRTVVSEDSSLRVNLVGDFAGYTSLPSLENFYLVTPRKGVGGGQLEVLGDDFSRWMLLERVLFTLDGLECNKIGVGYEAFRSQPNFCSSPLDSCLGDQLSKFWEIDKNRVNNSQPPQYVVLGKFERINQYPNAGVHTFSVGIPEVLNTNLMIELSADDIEYVYQRSSGKIISINISSFEALSQVGSARVKTKNIGRLEASYSLTFDCLSGINPVEEQYFIMKPDEKLIRTFDLRSSTDQASNYTCQAILKASDFSELDRKESQFSTTATVLNNGTQIGSSENHTKGGIWGFFEAIKAWCAKMWHMLINFFTGTTCSTRCWSFLKFVIHGLLLVAVLWLLHRKGLFDPLYYWWDGVVGSEAQERARRRHKRAHSHRHSHHHDAHKRHKTELAGHRRHHVLHIHDDDDPVAAAAAAEHVILRRHGRHEAALGVQHRDGLKLNKHRRHGGKAVALLPPGEIIVRDGGGCGGVEHGDRRHHAWH.

The signal sequence occupies residues 1 to 33 (MAPRRRRRAARSSRPLLLALLAAAVNNFAPAGG). Over 34 to 552 (VEVLAKSRLE…FFTGTTCSTR (519 aa)) the chain is Extracellular. Disulfide bonds link Cys45-Cys59, Cys134-Cys164, Cys146-Cys194, Cys165-Cys321, Cys167-Cys177, Cys304-Cys328, and Cys441-Cys479. Residues 553–573 (CWSFLKFVIHGLLLVAVLWLL) form a helical membrane-spanning segment. Topologically, residues 574 to 714 (HRKGLFDPLY…HGDRRHHAWH (141 aa)) are cytoplasmic. The tract at residues 597-619 (RARRRHKRAHSHRHSHHHDAHKR) is disordered. Residues 598–619 (ARRRHKRAHSHRHSHHHDAHKR) show a composition bias toward basic residues.

This sequence belongs to the HAP2/GCS1 family.

It is found in the endoplasmic reticulum membrane. It localises to the cell membrane. Functionally, required for male fertility. Plays a role in pollen tube guidance and successful gamete attachment. Essential for the fusion of gametes during double fertilization, where one male gamete fuses with the egg to produce a zygote, and another male gamete fuses with the central cell to produce the endosperm. Mediates the fusion of cell membranes. Not required for pollen tube outgrowth. This is Protein HAPLESS 2-B (HAP2B) from Oryza sativa subsp. japonica (Rice).